The following is a 465-amino-acid chain: Cysteine--tRNA ligase (465 aa).

Zn(2+) is bound at residue Cys-27. A 'HIGH' region motif is present at residues 29-39 (PTVYDDAHLGH). Zn(2+) contacts are provided by Cys-207, His-237, and Glu-241. A 'KMSKS' region motif is present at residues 269 to 273 (KMSKS). Lys-272 contributes to the ATP binding site.

The protein belongs to the class-I aminoacyl-tRNA synthetase family. As to quaternary structure, monomer. Zn(2+) is required as a cofactor.

It localises to the cytoplasm. It carries out the reaction tRNA(Cys) + L-cysteine + ATP = L-cysteinyl-tRNA(Cys) + AMP + diphosphate. This chain is Cysteine--tRNA ligase, found in Helicobacter pylori (strain G27).